The chain runs to 136 residues: Large-conductance mechanosensitive channel (136 aa).

2 helical membrane-spanning segments follow: residues 9-29 and 79-99; these read AFAS…GAAF and IQTV…LKAI.

This sequence belongs to the MscL family. Homopentamer.

It localises to the cell inner membrane. In terms of biological role, channel that opens in response to stretch forces in the membrane lipid bilayer. May participate in the regulation of osmotic pressure changes within the cell. The protein is Large-conductance mechanosensitive channel of Shewanella sp. (strain W3-18-1).